Consider the following 208-residue polypeptide: MDAIFYPLPIGETGDNEKYLEDFQEEDFQEEDFQEEDFQEEDFQEEDEDEEDEEVNEYPSDLDDEYPDSDYYDERSDRHWSDDDSDRDLDDLYDEYENYYEEVQVKKQNLEVEIIDITPEIEILNQNEKEKFNQVEDKLTTLSKNLTCIICLTNQVQILTIPCGHLIMCNPCSLNLNNSVCTRGVNSNYEKCPKCRTPIYNKIIARLP.

Residues 1-87 (MDAIFYPLPI…RHWSDDDSDR (87 aa)) are disordered. Residues 22-71 (DFQEEDFQEEDFQEEDFQEEDFQEEDEDEEDEEVNEYPSDLDDEYPDSDY) are compositionally biased toward acidic residues. Residues 72–82 (YDERSDRHWSD) show a composition bias toward basic and acidic residues. Residues 83 to 147 (DDSDRDLDDL…KLTTLSKNLT (65 aa)) adopt a coiled-coil conformation. The segment at 148-196 (CIICLTNQVQILTIPCGHLIMCNPCSLNLNNSVCTRGVNSNYEKCPKCR) adopts an RING-type zinc-finger fold.

The sequence is that of Putative RING finger protein 413R (EF2) from Acheta domesticus (House cricket).